Reading from the N-terminus, the 143-residue chain is Glutamyl-tRNA(Gln) amidotransferase subunit C, chloroplastic/mitochondrial (143 aa).

Belongs to the GatC family. In terms of assembly, subunit of the heterotrimeric GatCAB amidotransferase (AdT) complex, composed of A, B and C subunits.

The protein localises to the mitochondrion. It localises to the plastid. It is found in the chloroplast. The enzyme catalyses L-glutamyl-tRNA(Gln) + L-glutamine + ATP + H2O = L-glutaminyl-tRNA(Gln) + L-glutamate + ADP + phosphate + H(+). In terms of biological role, allows the formation of correctly charged Gln-tRNA(Gln) through the transamidation of misacylated Glu-tRNA(Gln) in chloroplasts and mitochondria. The reaction takes place in the presence of glutamine and ATP through an activated gamma-phospho-Glu-tRNA(Gln). The protein is Glutamyl-tRNA(Gln) amidotransferase subunit C, chloroplastic/mitochondrial of Ricinus communis (Castor bean).